Consider the following 66-residue polypeptide: Large ribosomal subunit protein bL35 (66 aa).

Basic residues predominate over residues 1–28 (MPKMKTHRGSAKRFKRTGSGKLKRRHGF). Positions 1–50 (MPKMKTHRGSAKRFKRTGSGKLKRRHGFTSHMFANKSQKQKRKLRKSAMV) are disordered.

It belongs to the bacterial ribosomal protein bL35 family.

The sequence is that of Large ribosomal subunit protein bL35 from Listeria monocytogenes serotype 4a (strain HCC23).